Reading from the N-terminus, the 197-residue chain is Crossover junction endodeoxyribonuclease RuvC (197 aa).

Residues Asp7, Glu68, and Asp141 contribute to the active site. Mg(2+) contacts are provided by Asp7, Glu68, and Asp141. Composition is skewed to low complexity over residues 165–181 (AAPA…TPAR) and 188–197 (APARRPAGAS). The interval 165–197 (AAPAAPVSRPAPATPARRSPRPAAPARRPAGAS) is disordered.

This sequence belongs to the RuvC family. In terms of assembly, homodimer which binds Holliday junction (HJ) DNA. The HJ becomes 2-fold symmetrical on binding to RuvC with unstacked arms; it has a different conformation from HJ DNA in complex with RuvA. In the full resolvosome a probable DNA-RuvA(4)-RuvB(12)-RuvC(2) complex forms which resolves the HJ. Requires Mg(2+) as cofactor.

Its subcellular location is the cytoplasm. It carries out the reaction Endonucleolytic cleavage at a junction such as a reciprocal single-stranded crossover between two homologous DNA duplexes (Holliday junction).. Its function is as follows. The RuvA-RuvB-RuvC complex processes Holliday junction (HJ) DNA during genetic recombination and DNA repair. Endonuclease that resolves HJ intermediates. Cleaves cruciform DNA by making single-stranded nicks across the HJ at symmetrical positions within the homologous arms, yielding a 5'-phosphate and a 3'-hydroxyl group; requires a central core of homology in the junction. The consensus cleavage sequence is 5'-(A/T)TT(C/G)-3'. Cleavage occurs on the 3'-side of the TT dinucleotide at the point of strand exchange. HJ branch migration catalyzed by RuvA-RuvB allows RuvC to scan DNA until it finds its consensus sequence, where it cleaves and resolves the cruciform DNA. This Frankia alni (strain DSM 45986 / CECT 9034 / ACN14a) protein is Crossover junction endodeoxyribonuclease RuvC.